A 243-amino-acid chain; its full sequence is Adenosylcobinamide-GDP ribazoletransferase (243 aa).

A run of 5 helical transmembrane segments spans residues 31-51 (LLFYPLVGVVFGMLLLGFSAL), 57-77 (LMLHAALVLSAWVLLSGGLHL), 109-129 (IAVVTLVLVLLLKFAAILALI), 135-155 (IGLLLAPVIGRAAMLGLFLGT), and 188-208 (VLLAGWSGVAVLLVCAVCFFW).

It belongs to the CobS family. Mg(2+) is required as a cofactor.

Its subcellular location is the cell inner membrane. The catalysed reaction is alpha-ribazole + adenosylcob(III)inamide-GDP = adenosylcob(III)alamin + GMP + H(+). The enzyme catalyses alpha-ribazole 5'-phosphate + adenosylcob(III)inamide-GDP = adenosylcob(III)alamin 5'-phosphate + GMP + H(+). It functions in the pathway cofactor biosynthesis; adenosylcobalamin biosynthesis; adenosylcobalamin from cob(II)yrinate a,c-diamide: step 7/7. In terms of biological role, joins adenosylcobinamide-GDP and alpha-ribazole to generate adenosylcobalamin (Ado-cobalamin). Also synthesizes adenosylcobalamin 5'-phosphate from adenosylcobinamide-GDP and alpha-ribazole 5'-phosphate. The sequence is that of Adenosylcobinamide-GDP ribazoletransferase from Pseudomonas savastanoi pv. phaseolicola (strain 1448A / Race 6) (Pseudomonas syringae pv. phaseolicola (strain 1448A / Race 6)).